The following is a 262-amino-acid chain: 3-methyl-2-oxobutanoate hydroxymethyltransferase (262 aa).

The Mg(2+) site is built by aspartate 42 and aspartate 81. 3-methyl-2-oxobutanoate is bound by residues 42-43 (DS), aspartate 81, and lysine 110. Glutamate 112 serves as a coordination point for Mg(2+). The active-site Proton acceptor is the glutamate 179.

The protein belongs to the PanB family. In terms of assembly, homodecamer; pentamer of dimers. It depends on Mg(2+) as a cofactor.

Its subcellular location is the cytoplasm. The enzyme catalyses 3-methyl-2-oxobutanoate + (6R)-5,10-methylene-5,6,7,8-tetrahydrofolate + H2O = 2-dehydropantoate + (6S)-5,6,7,8-tetrahydrofolate. Its pathway is cofactor biosynthesis; (R)-pantothenate biosynthesis; (R)-pantoate from 3-methyl-2-oxobutanoate: step 1/2. In terms of biological role, catalyzes the reversible reaction in which hydroxymethyl group from 5,10-methylenetetrahydrofolate is transferred onto alpha-ketoisovalerate to form ketopantoate. This Methylobacillus flagellatus (strain ATCC 51484 / DSM 6875 / VKM B-1610 / KT) protein is 3-methyl-2-oxobutanoate hydroxymethyltransferase.